We begin with the raw amino-acid sequence, 41 residues long: Hemoglobin subunit beta (41 aa).

One can recognise a Globin domain in the interval 1 to 41; the sequence is LGNVLVCVLAHHFGKEFTPQVQAAYQKVVAGVANALAHKYH. At K39 the chain carries N6-acetyllysine.

The protein belongs to the globin family. In terms of assembly, heterotetramer of two alpha chains and two beta chains. Red blood cells.

Functionally, involved in oxygen transport from the lung to the various peripheral tissues. The polypeptide is Hemoglobin subunit beta (HBB) (Colobus guereza (Mantled guereza)).